The following is a 52-amino-acid chain: Insulin (52 aa).

Intrachain disulfides connect cysteine 7–cysteine 38, cysteine 19–cysteine 51, and cysteine 37–cysteine 42.

This sequence belongs to the insulin family. In terms of assembly, heterodimer of a B chain and an A chain linked by two disulfide bonds.

The protein localises to the secreted. In terms of biological role, insulin decreases blood glucose concentration. It increases cell permeability to monosaccharides, amino acids and fatty acids. It accelerates glycolysis, the pentose phosphate cycle, and glycogen synthesis in liver. The chain is Insulin (ins) from Atractosteus spatula (Alligator gar).